The following is a 142-amino-acid chain: Centromere protein S (142 aa).

Positions Leu-107 to Ser-142 are disordered. The span at Lys-116–Met-128 shows a compositional bias: basic and acidic residues. The span at Ala-129–Ser-142 shows a compositional bias: acidic residues.

The protein belongs to the TAF9 family. CENP-S/MHF1 subfamily. In terms of assembly, heterodimer with CENPX, sometimes called MHF; this interaction stabilizes both partners. MHF heterodimers can assemble to form tetrameric structures. MHF also coassemble with CENPT-CENPW heterodimers at centromeres to form the tetrameric CENP-T-W-S-X complex. Forms a discrete complex with FANCM and CENPX, called FANCM-MHF; this interaction, probably mediated by direct binding between CENPS and FANCM, leads to synergistic activation of double-stranded DNA binding and strongly stimulates FANCM-mediated DNA remodeling. Recruited by FANCM to the Fanconi anemia (FA) core complex, which consists of CENPS, CENPX, FANCA, FANCB, FANCC, FANCE, FANCF, FANCG, FANCL, FANCM, FAAP24 and FAAP100. The FA core complex associates with Bloom syndrome (BLM) complex, which consists of at least BLM, DNA topoisomerase 3-alpha (TOP3A), RMI1/BLAP75, RPA1/RPA70 and RPA2/RPA32. The super complex between FA and BLM is called BRAFT. Component of the CENPA-CAD complex, composed of CENPI, CENPK, CENPL, CENPO, CENPP, CENPQ, CENPR and CENPS. The CENPA-CAD complex is probably recruited on centromeres by the CENPA-NAC complex, at least composed of CENPA, CENPC, CENPH, CENPM, CENPN, CENPT and CENPU.

The protein resides in the nucleus. The protein localises to the chromosome. It localises to the centromere. Its subcellular location is the kinetochore. DNA-binding component of the Fanconi anemia (FA) core complex. Required for the normal activation of the FA pathway, leading to monoubiquitination of the FANCI-FANCD2 complex in response to DNA damage, cellular resistance to DNA cross-linking drugs, and prevention of chromosomal breakage. In complex with CENPX (MHF heterodimer), crucial cofactor for FANCM in both binding and ATP-dependent remodeling of DNA. Stabilizes FANCM. In complex with CENPX and FANCM (but not other FANC proteins), rapidly recruited to blocked forks and promotes gene conversion at blocked replication forks. In complex with CENPT, CENPW and CENPX (CENP-T-W-S-X heterotetramer), involved in the formation of a functional kinetochore outer plate, which is essential for kinetochore-microtubule attachment and faithful mitotic progression. As a component of MHF and CENP-T-W-S-X complexes, binds DNA and bends it to form a nucleosome-like structure. DNA-binding function is fulfilled in the presence of CENPX, with the following preference for DNA substates: Holliday junction &gt; double-stranded &gt; splay arm &gt; single-stranded. Does not bind DNA on its own. This Mus musculus (Mouse) protein is Centromere protein S (Cenps).